The following is a 197-amino-acid chain: UPF0228 protein MA_3125 (197 aa).

Belongs to the UPF0228 family.

This Methanosarcina acetivorans (strain ATCC 35395 / DSM 2834 / JCM 12185 / C2A) protein is UPF0228 protein MA_3125.